The primary structure comprises 224 residues: dTTP/UTP pyrophosphatase (224 aa).

Asp-77 acts as the Proton acceptor in catalysis.

It belongs to the Maf family. YhdE subfamily. Requires a divalent metal cation as cofactor.

The protein resides in the cytoplasm. The enzyme catalyses dTTP + H2O = dTMP + diphosphate + H(+). It carries out the reaction UTP + H2O = UMP + diphosphate + H(+). Nucleoside triphosphate pyrophosphatase that hydrolyzes dTTP and UTP. May have a dual role in cell division arrest and in preventing the incorporation of modified nucleotides into cellular nucleic acids. This is dTTP/UTP pyrophosphatase from Dehalococcoides mccartyi (strain CBDB1).